A 297-amino-acid chain; its full sequence is ClpXP adapter protein SpxH (297 aa).

Belongs to the SpxH family. In terms of assembly, interacts with Spx.

Its subcellular location is the cytoplasm. Adapter protein required for efficient degradation of Spx by ClpXP under non-stress conditions. Interaction with Spx stabilizes Spx and exposes the C-terminus of Spx for recognition and proteolysis by ClpXP. This chain is ClpXP adapter protein SpxH, found in Bacillus cereus (strain ATCC 14579 / DSM 31 / CCUG 7414 / JCM 2152 / NBRC 15305 / NCIMB 9373 / NCTC 2599 / NRRL B-3711).